A 508-amino-acid chain; its full sequence is Cytochrome P450 monooxygenase tenA (508 aa).

A helical membrane pass occupies residues 8–24 (VSLPYLILSACLSVILL). Cys456 lines the heme pocket.

The protein belongs to the cytochrome P450 family. Heme is required as a cofactor.

The protein localises to the membrane. It functions in the pathway secondary metabolite biosynthesis. Functionally, cytochrome P450 monooxygenase; part of the gene cluster that mediates the biosynthesis of tenellin-type 2-pyridones, iron-chelating compounds involved in iron stress tolerance, competition with the natural competitor fungus Metarhizium robertsii and insect hosts infection. TenA catalyzes an oxidative ring expansion of pretenellin A and 14-hydropretellenin A to form the 2-pyridone core, leading to the production of pretenellin B and pyridovericin, respectively. The pathway begins with the assembly of the polyketide-amino acid backbone by the hybrid PKS-NRPS tenS with the help of the enoyl reductase tenC. These enzymes catalyze the synthesis of the pyrrolidine-2-dione intermediates pretellinin A, 11-hydropretellenin A, 12-hydropretellenin A, 13-hydropretellenin A, 14-hydropretellenin A, 12-oxopretellenin A and prototellinin D. The cytochrome P450 monooxygenase tenA then catalyzes an oxidative ring expansion of pretenellin A and 14-hydropretellenin A to form the 2-pyridone core, leading to pretenellin B and pyridovericin, respectively. The cytochrome P450 monooxygenase tenB is then required for the selective N-hydroxylation of the 2-pyridone nitrogen of yield tellinin and 15-hydroxytellenin (15-HT), respectively. The UDP-glucosyltransferase GT1 and the methyltransferase MT1, located outside the tenS gene cluster, contribute to the stepwise glycosylation and methylation of 15-HT to obtain the glycoside pyridovericin-N-O-(4-O-methyl-beta-D-glucopyranoside) (PMGP). Additional related compounds such as 1-O-methyl-15-HT, (8Z)-1-O-methyl-15-HT, and O-methyltenellin A are also produced but the enzymes involved in their biosynthesis have still to be determined. In Beauveria bassiana (White muscardine disease fungus), this protein is Cytochrome P450 monooxygenase tenA.